The following is a 199-amino-acid chain: FMN-dependent NADH:quinone oxidoreductase (199 aa).

FMN-binding positions include serine 9 and 95 to 98; that span reads MYNF.

The protein belongs to the azoreductase type 1 family. In terms of assembly, homodimer. FMN is required as a cofactor.

The catalysed reaction is 2 a quinone + NADH + H(+) = 2 a 1,4-benzosemiquinone + NAD(+). It catalyses the reaction N,N-dimethyl-1,4-phenylenediamine + anthranilate + 2 NAD(+) = 2-(4-dimethylaminophenyl)diazenylbenzoate + 2 NADH + 2 H(+). Functionally, quinone reductase that provides resistance to thiol-specific stress caused by electrophilic quinones. Its function is as follows. Also exhibits azoreductase activity. Catalyzes the reductive cleavage of the azo bond in aromatic azo compounds to the corresponding amines. In Dechloromonas aromatica (strain RCB), this protein is FMN-dependent NADH:quinone oxidoreductase.